Consider the following 442-residue polypeptide: Urokinase-type plasminogen activator (442 aa).

Positions Met1–Gly20 are cleaved as a signal peptide. The EGF-like domain maps to Gly29 to Glu65. 12 disulfide bridges follow: Cys33/Cys41, Cys35/Cys53, Cys55/Cys64, Cys72/Cys153, Cys93/Cys135, Cys124/Cys148, Cys179/Cys310, Cys220/Cys236, Cys228/Cys299, Cys324/Cys393, Cys356/Cys372, and Cys383/Cys411. Residues Leu36 to Phe59 form a binds urokinase plasminogen activator surface receptor region. Residues Cys72–Cys153 form the Kringle domain. Asn152 carries an N-linked (GlcNAc...) asparagine glycan. Residues Ser154–Lys189 form a connecting peptide region. The Peptidase S1 domain occupies Ile190–Gly435. Catalysis depends on charge relay system residues His235 and Asp286. The active-site Charge relay system is the Ser387.

The protein belongs to the peptidase S1 family. In terms of assembly, found in high and low molecular mass forms. Each consists of two chains, A and B. The high molecular mass form contains a long chain A which is cleaved to yield a short chain A. Forms heterodimer with SERPINA5. Binds LRP1B; binding is followed by internalization and degradation. Interacts with MRC2. Interacts with PLAUR. In complex with SERPINE1, interacts with PLAUR/uPAR. Interacts with SORL1 and LRP1, either alone or in complex with SERPINE1; these interactions are abolished in the presence of LRPAP1/RAP. The ternary complex composed of PLAUR-PLAU-PAI1 also interacts with SORLA. Produced as an inactive single-chain protein (pro-uPA or sc-uPA), is processed into the active disulfide-linked two-chain form of PLAU/uPA by a proteolytic event mediated, at least, by TMPRSS4.

Its subcellular location is the secreted. The enzyme catalyses Specific cleavage of Arg-|-Val bond in plasminogen to form plasmin.. Inhibited by SERPINA5. Inhibited by SERPINE1. Specifically cleaves the zymogen plasminogen to form the active enzyme plasmin. The sequence is that of Urokinase-type plasminogen activator (PLAU) from Sus scrofa (Pig).